A 374-amino-acid chain; its full sequence is tRNA-specific 2-thiouridylase MnmA (374 aa).

ATP-binding positions include 17-24 (GMSGGVDS) and Met-43. The interaction with target base in tRNA stretch occupies residues 103–105 (NPD). Cys-108 functions as the Nucleophile in the catalytic mechanism. The cysteines at positions 108 and 204 are disulfide-linked. Gly-132 is a binding site for ATP. The interaction with tRNA stretch occupies residues 154-156 (KDQ). Cys-204 serves as the catalytic Cysteine persulfide intermediate. Positions 316 to 317 (RY) are interaction with tRNA.

The protein belongs to the MnmA/TRMU family.

The protein localises to the cytoplasm. The catalysed reaction is S-sulfanyl-L-cysteinyl-[protein] + uridine(34) in tRNA + AH2 + ATP = 2-thiouridine(34) in tRNA + L-cysteinyl-[protein] + A + AMP + diphosphate + H(+). In terms of biological role, catalyzes the 2-thiolation of uridine at the wobble position (U34) of tRNA, leading to the formation of s(2)U34. In Pseudomonas putida (strain W619), this protein is tRNA-specific 2-thiouridylase MnmA.